Consider the following 253-residue polypeptide: Small ribosomal subunit protein uS2 (253 aa).

Belongs to the universal ribosomal protein uS2 family.

The chain is Small ribosomal subunit protein uS2 from Cereibacter sphaeroides (strain ATCC 17023 / DSM 158 / JCM 6121 / CCUG 31486 / LMG 2827 / NBRC 12203 / NCIMB 8253 / ATH 2.4.1.) (Rhodobacter sphaeroides).